A 212-amino-acid polypeptide reads, in one-letter code: Phosphoribosyl-dephospho-CoA transferase (212 aa).

Catalysis depends on residues Asp-139 and Asp-141.

Belongs to the MdcG family.

The catalysed reaction is apo-[malonate decarboxylase ACP] + 2'-(5''-triphospho-alpha-D-ribosyl)-3'-dephospho-CoA = holo-[malonate decarboxylase ACP] + diphosphate. Transfers 2'-(5-triphosphoribosyl)-3'-dephosphocoenzyme-A to the apo-[acyl-carrier-protein] of the malonate decarboxylase to yield holo-[acyl-carrier-protein]. The chain is Phosphoribosyl-dephospho-CoA transferase from Azotobacter vinelandii (strain DJ / ATCC BAA-1303).